The primary structure comprises 150 residues: Male-specific protein scotti (150 aa).

Residues 60-84 (PPMAVFPARGGPNGGPPRLRKKRSF) form a disordered region. An N-linked (GlcNAc...) asparagine glycan is attached at Asn131.

Belongs to the male-specific scotti family.

In terms of biological role, post-meiotically transcribed gene that has a role in late spermiogenesis; required for actin cone progression during spermatid individualization. This chain is Male-specific protein scotti, found in Drosophila yakuba (Fruit fly).